The primary structure comprises 805 residues: U-box domain-containing protein 70 (805 aa).

7 TPR repeats span residues 15–48 (ARRE…DPRD), 49–82 (ISFL…GREL), 90–127 (ARAL…HYSE), 129–153 (TLAK…DQEA), 154–187 (ADHH…NPKD), 189–221 (RVFS…DPTF), and 222–255 (LKGY…DPNN). The segment at 136–160 (AEEARKEIEERERLDQEAADHHRDR) is disordered. Residues 341-417 (RKETEESLSR…VREVEELRQK (77 aa)) adopt a coiled-coil conformation. The 267-residue stretch at 445–711 (FSNSLKIGEG…GEVWAIVEAI (267 aa)) folds into the Protein kinase domain. Residues 451-459 (IGEGGFGCV) and Lys472 each bind ATP. The active-site Proton acceptor is the Asp567. A U-box domain is found at 730 to 804 (SPPSYFICPI…QEWLQQHSMS (75 aa)).

It belongs to the protein kinase superfamily. Ser/Thr protein kinase family. As to quaternary structure, interacts with MODD.

It carries out the reaction L-seryl-[protein] + ATP = O-phospho-L-seryl-[protein] + ADP + H(+). The catalysed reaction is L-threonyl-[protein] + ATP = O-phospho-L-threonyl-[protein] + ADP + H(+). It catalyses the reaction S-ubiquitinyl-[E2 ubiquitin-conjugating enzyme]-L-cysteine + [acceptor protein]-L-lysine = [E2 ubiquitin-conjugating enzyme]-L-cysteine + N(6)-ubiquitinyl-[acceptor protein]-L-lysine.. It participates in protein modification; protein ubiquitination. In terms of biological role, functions as an E3 ubiquitin ligase. Is recruited by MODD to promote ubiquitination of BZIP46, a positive regulator of abscisic acid (ABA) signaling and drought stress tolerance. In Oryza sativa subsp. japonica (Rice), this protein is U-box domain-containing protein 70.